A 204-amino-acid chain; its full sequence is Signal peptidase I (204 aa).

The Cytoplasmic portion of the chain corresponds to 1–10 (MNSFKNFLKE). A helical transmembrane segment spans residues 11 to 30 (WGLFLLILSLLALSRIFFWS). Over 31-204 (NVRVEGHSMD…LWPITRIGTF (174 aa)) the chain is Extracellular. Active-site residues include Ser38 and Lys76.

This sequence belongs to the peptidase S26 family.

The protein localises to the cell membrane. The catalysed reaction is Cleavage of hydrophobic, N-terminal signal or leader sequences from secreted and periplasmic proteins.. In Streptococcus pneumoniae serotype 4 (strain ATCC BAA-334 / TIGR4), this protein is Signal peptidase I (lepB).